The following is a 349-amino-acid chain: Very-long-chain 3-oxoacyl-CoA reductase (349 aa).

A helical transmembrane segment spans residues 29 to 49 (AASLVFATGGLFLLSRGLSFL). NADP(+)-binding residues include L74, D129, D137, N156, Y223, K227, V256, and S258. Catalysis depends on Y223, which acts as the Proton donor. K227 acts as the Lowers pKa of active site Tyr in catalysis.

The protein belongs to the short-chain dehydrogenases/reductases (SDR) family.

Its subcellular location is the endoplasmic reticulum membrane. The enzyme catalyses a very-long-chain (3R)-3-hydroxyacyl-CoA + NADP(+) = a very-long-chain 3-oxoacyl-CoA + NADPH + H(+). The protein operates within lipid metabolism; fatty acid biosynthesis. Its function is as follows. Component of the microsomal membrane bound fatty acid elongation system, which produces the 26-carbon very long-chain fatty acids (VLCFA) from palmitate. Catalyzes the reduction of the 3-ketoacyl-CoA intermediate that is formed in each cycle of fatty acid elongation. VLCFAs serve as precursors for ceramide and sphingolipids. In Coccidioides immitis (strain RS) (Valley fever fungus), this protein is Very-long-chain 3-oxoacyl-CoA reductase.